The chain runs to 265 residues: uncharacterized protein (265 aa).

The stretch at 143-205 forms a coiled coil; sequence ATQKALKDSI…EKLIKSVEKA (63 aa).

This is an uncharacterized protein from Aquifex aeolicus (strain VF5).